Reading from the N-terminus, the 88-residue chain is SPbeta prophage-derived protein BhlB (88 aa).

Transmembrane regions (helical) follow at residues 15-35 (LLAIALLNQIMVMLGKAAFII) and 45-65 (DCLYTIFTIVFTTSTTTAAWF).

It belongs to the SPP1 holin family.

It localises to the cell membrane. May be involved in the secretion of the autolysin BlyA. This Bacillus subtilis (strain 168) protein is SPbeta prophage-derived protein BhlB (bhlB).